The primary structure comprises 332 residues: NADH-quinone oxidoreductase subunit H (332 aa).

9 consecutive transmembrane segments (helical) span residues 16–36 (VFFG…TYAI), 87–107 (YVLA…ALPF), 116–136 (IGVG…GVVT), 164–184 (LVMS…VDIV), 190–210 (VWFI…AVAE), 231–251 (VEYS…YLFA), 253–273 (AALI…LGWI), 277–297 (VWFA…RATF), and 312–332 (VLLP…SLFF).

This sequence belongs to the complex I subunit 1 family. NDH-1 is composed of 14 different subunits. Subunits NuoA, H, J, K, L, M, N constitute the membrane sector of the complex.

It is found in the cell membrane. The enzyme catalyses a quinone + NADH + 5 H(+)(in) = a quinol + NAD(+) + 4 H(+)(out). Functionally, NDH-1 shuttles electrons from NADH, via FMN and iron-sulfur (Fe-S) centers, to quinones in the respiratory chain. The immediate electron acceptor for the enzyme in this species is believed to be ubiquinone. Couples the redox reaction to proton translocation (for every two electrons transferred, four hydrogen ions are translocated across the cytoplasmic membrane), and thus conserves the redox energy in a proton gradient. This subunit may bind ubiquinone. The sequence is that of NADH-quinone oxidoreductase subunit H from Geobacillus thermodenitrificans (strain NG80-2).